The chain runs to 452 residues: UDP-N-acetylmuramoyl-L-alanine--L-glutamate ligase (452 aa).

Residue glycine 118–threonine 124 coordinates ATP.

This sequence belongs to the MurCDEF family. MurD2 subfamily.

The protein localises to the cytoplasm. It carries out the reaction UDP-N-acetyl-alpha-D-muramoyl-L-alanine + L-glutamate + ATP = UDP-N-acetyl-alpha-D-muramoyl-L-alanyl-L-glutamate + ADP + phosphate + H(+). It participates in cell wall biogenesis; peptidoglycan biosynthesis. Functionally, cell wall formation. Catalyzes the addition of L-glutamate to the nucleotide precursor UDP-N-acetylmuramoyl-L-alanine. The chain is UDP-N-acetylmuramoyl-L-alanine--L-glutamate ligase from Micromonospora sp. (strain ATCC 39149 / NRRL 15099 / SCC 1413).